Here is a 248-residue protein sequence, read N- to C-terminus: Probable transcriptional regulatory protein Smed_2641 (248 aa).

Belongs to the TACO1 family.

Its subcellular location is the cytoplasm. The chain is Probable transcriptional regulatory protein Smed_2641 from Sinorhizobium medicae (strain WSM419) (Ensifer medicae).